We begin with the raw amino-acid sequence, 95 residues long: Large ribosomal subunit protein uL23 (95 aa).

This sequence belongs to the universal ribosomal protein uL23 family. Part of the 50S ribosomal subunit. Contacts protein L29, and trigger factor when it is bound to the ribosome.

In terms of biological role, one of the early assembly proteins it binds 23S rRNA. One of the proteins that surrounds the polypeptide exit tunnel on the outside of the ribosome. Forms the main docking site for trigger factor binding to the ribosome. This is Large ribosomal subunit protein uL23 from Levilactobacillus brevis (strain ATCC 367 / BCRC 12310 / CIP 105137 / JCM 1170 / LMG 11437 / NCIMB 947 / NCTC 947) (Lactobacillus brevis).